We begin with the raw amino-acid sequence, 568 residues long: CTP synthase (568 aa).

The segment at 1–276 is amidoligase domain; sequence MPQARTIKHV…DAYLVRRLGL (276 aa). A CTP-binding site is contributed by Ser18. Position 18 (Ser18) interacts with UTP. ATP contacts are provided by residues 19-24 and Asp76; that span reads SLGKGL. Residues Asp76 and Glu150 each coordinate Mg(2+). Residues 157–159, 197–202, and Lys233 each bind CTP; these read DIE and KTKPTQ. UTP-binding positions include 197–202 and Lys233; that span reads KTKPTQ. Residues 301-550 enclose the Glutamine amidotransferase type-1 domain; that stretch reads RIALVGKYVD…VNAALEYRAA (250 aa). Residue Gly364 participates in L-glutamine binding. Cys391 serves as the catalytic Nucleophile; for glutamine hydrolysis. Residues 392–395, Glu415, and Arg476 contribute to the L-glutamine site; that span reads LGLQ. Residues His523 and Glu525 contribute to the active site.

Belongs to the CTP synthase family. In terms of assembly, homotetramer.

It carries out the reaction UTP + L-glutamine + ATP + H2O = CTP + L-glutamate + ADP + phosphate + 2 H(+). The catalysed reaction is L-glutamine + H2O = L-glutamate + NH4(+). The enzyme catalyses UTP + NH4(+) + ATP = CTP + ADP + phosphate + 2 H(+). It functions in the pathway pyrimidine metabolism; CTP biosynthesis via de novo pathway; CTP from UDP: step 2/2. Allosterically activated by GTP, when glutamine is the substrate; GTP has no effect on the reaction when ammonia is the substrate. The allosteric effector GTP functions by stabilizing the protein conformation that binds the tetrahedral intermediate(s) formed during glutamine hydrolysis. Inhibited by the product CTP, via allosteric rather than competitive inhibition. In terms of biological role, catalyzes the ATP-dependent amination of UTP to CTP with either L-glutamine or ammonia as the source of nitrogen. Regulates intracellular CTP levels through interactions with the four ribonucleotide triphosphates. The chain is CTP synthase from Saccharopolyspora erythraea (strain ATCC 11635 / DSM 40517 / JCM 4748 / NBRC 13426 / NCIMB 8594 / NRRL 2338).